A 1015-amino-acid chain; its full sequence is MTLAFKILFPRNLCALGRKELCLFPEQNRWAAISQFSQWSETNLLGGCCLLQRRKPVLALQRGHLRPRATHLTFWPGSHVGLCTGPCAMAEQRFCVDYAKRGTAGCKKCKEKIVKGVCRIGKVVPNPFSESGGDMKEWYHIKCMFEKLERARATTKKIEDLTELEGWEELEDNEKEQISQHIADLSSKAAATPKKKAAVQAKLTTTGQVTSPVKGASFITSTNPRKFSGFSAAKPNNSEQAPSSPAPGTSLSASKCDPKHKDCLLREFRKLCAMVAENPSYNTKTQIIHDFLQKGSTGGFSDGFHGDVYLTVKLLLPGVIKSVYNLNDKQIVKLFSRIFNCNPDDMARDLEQGDVSETIRIFFEQSKSFPPAAKSLLTIQEVDAFLLHLSKLTKEDEQQQALQDIASRCTANDLKCIIRLIKHDLKMNSGAKHVLDALDPNAYEAFKASRNLQDVVERVLHNEQEVEKDPGRRRALRVQASLMTPVQPMLAEACKSIEYAMKKCPNGMFSEIKYDGERVQVHKKGDHFSYFSRSLKPVLPHKVAHFKDYIPKAFPGGQSMILDSEVLLIDNNTGKPLPFGTLGVHKKAAFQDANVCLFVFDCIYFNDVSLMDRPLCERRKFLHDNMVEIRNRIMFSEMKQVTKASDLADMINRVIREGLEGLVLKDVKGTYEPGKRHWLKVKKDYLNEGAMADTADLVVLGAFYGQGSKGGMMSIFLMGCYDPDSQKWCTVTKCAGGHDDATLARLQKELVMVKISKDPSKIPSWLKINKIYYPDFIVPDPKKAAVWEITGAEFSRSEAHTADGISIRFPRCTRIRDDKDWKSATNLPQLKELYQLSKDKADFAVVAGDEASPTTGGSSGENEGTAGSAGPCKGPPSKSSASAKTTEQKLNSPSSRGGIKPIPKHSPMKPGEKLAVKSSPVKVGMKRKATDETPCLKKVLLDVFTGVRLYLPPSTPDFKRLKRYFVAFDGDLVQEFDMGSATHVLGNREKNTDAQLVSSEWIWACIRKRRLIAPC.

The PARP-type zinc-finger motif lies at 94–186; sequence FCVDYAKRGT…QISQHIADLS (93 aa). Cysteine 106, cysteine 109, histidine 140, and cysteine 143 together coordinate Zn(2+). Serine 211, serine 217, serine 228, and serine 244 each carry phosphoserine. Residues 229–255 are disordered; the sequence is GFSAAKPNNSEQAPSSPAPGTSLSASK. Residues 234-253 show a composition bias toward polar residues; that stretch reads KPNNSEQAPSSPAPGTSLSA. Interaction with DNA stretches follow at residues 279-282, 323-328, 393-396, and 426-432; these read PSYN, VYNLND, TKED, and KMNSGAK. ATP is bound at residue glutamate 511. Lysine 513 serves as the catalytic N6-AMP-lysine intermediate. Residues arginine 518 and arginine 533 each contribute to the ATP site. Positions 565 and 660 each coordinate Mg(2+). Residues lysine 665, arginine 676, and lysine 680 each contribute to the ATP site. The tract at residues 849–926 is disordered; sequence DEASPTTGGS…KSSPVKVGMK (78 aa). Residues 854–884 show a composition bias toward low complexity; that stretch reads TTGGSSGENEGTAGSAGPCKGPPSKSSASAK. Residue serine 919 is modified to Phosphoserine. In terms of domain architecture, BRCT spans 939-1015; the sequence is VLLDVFTGVR…IRKRRLIAPC (77 aa).

Belongs to the ATP-dependent DNA ligase family. As to quaternary structure, isoform 3 interacts (via BRCT domain) with the nuclear DNA-repair protein XRCC1. Interacts with POLG. Interacts with POLB. The cofactor is Mg(2+). In terms of tissue distribution, the alpha isoform is expressed in all tissues, while the beta isoform is expressed only in the testis.

The protein resides in the nucleus. It catalyses the reaction ATP + (deoxyribonucleotide)n-3'-hydroxyl + 5'-phospho-(deoxyribonucleotide)m = (deoxyribonucleotide)n+m + AMP + diphosphate.. Functionally, the alpha isoform interacts with DNA-repair protein XRCC1 and can correct defective DNA strand-break repair and sister chromatid exchange following treatment with ionizing radiation and alkylating agents. The beta isoform does not interact with XRCC1 and may be specifically involved in the completion of homologous recombination events that occur during meiotic prophase. In Mus musculus (Mouse), this protein is DNA ligase 3 (Lig3).